Consider the following 109-residue polypeptide: ATP synthase subunit c (109 aa).

The next 2 membrane-spanning stretches (helical) occupy residues 42-62 (YIGT…QGFS) and 88-108 (LALA…IIFV).

Belongs to the ATPase C chain family. As to quaternary structure, F-type ATPases have 2 components, F(1) - the catalytic core - and F(0) - the membrane proton channel. F(1) has five subunits: alpha(3), beta(3), gamma(1), delta(1), epsilon(1). F(0) has three main subunits: a(1), b(2) and c(10-14). The alpha and beta chains form an alternating ring which encloses part of the gamma chain. F(1) is attached to F(0) by a central stalk formed by the gamma and epsilon chains, while a peripheral stalk is formed by the delta and b chains.

It localises to the cell membrane. Its function is as follows. F(1)F(0) ATP synthase produces ATP from ADP in the presence of a proton or sodium gradient. F-type ATPases consist of two structural domains, F(1) containing the extramembraneous catalytic core and F(0) containing the membrane proton channel, linked together by a central stalk and a peripheral stalk. During catalysis, ATP synthesis in the catalytic domain of F(1) is coupled via a rotary mechanism of the central stalk subunits to proton translocation. Functionally, key component of the F(0) channel; it plays a direct role in translocation across the membrane. A homomeric c-ring of between 10-14 subunits forms the central stalk rotor element with the F(1) delta and epsilon subunits. In Ureaplasma parvum serovar 3 (strain ATCC 27815 / 27 / NCTC 11736), this protein is ATP synthase subunit c.